The sequence spans 88 residues: Small ribosomal subunit protein bS20 (88 aa).

Positions 1–21 (MANTTSAKKATRKIARRTAVN) are disordered.

It belongs to the bacterial ribosomal protein bS20 family.

Functionally, binds directly to 16S ribosomal RNA. This chain is Small ribosomal subunit protein bS20, found in Agrobacterium fabrum (strain C58 / ATCC 33970) (Agrobacterium tumefaciens (strain C58)).